The primary structure comprises 226 residues: Probable proteasome subunit beta type-7 (226 aa).

It belongs to the peptidase T1B family. As to quaternary structure, the 26S proteasome consists of a 20S proteasome core and two 19S regulatory subunits. The 20S proteasome core is composed of 28 subunits that are arranged in four stacked rings, resulting in a barrel-shaped structure. The two end rings are each formed by seven alpha subunits, and the two central rings are each formed by seven beta subunits. The catalytic chamber with the active sites is on the inside of the barrel.

The protein resides in the cytoplasm. It is found in the nucleus. Non-catalytic component of the proteasome which degrades poly-ubiquitinated proteins in the cytoplasm and in the nucleus. It is essential for the regulated turnover of proteins and for the removal of misfolded proteins. The proteasome is a multicatalytic proteinase complex that is characterized by its ability to cleave peptides with Arg, Phe, Tyr, Leu, and Glu adjacent to the leaving group at neutral or slightly basic pH. It has an ATP-dependent proteolytic activity. The sequence is that of Probable proteasome subunit beta type-7 (PRE4) from Encephalitozoon cuniculi (strain GB-M1) (Microsporidian parasite).